A 430-amino-acid polypeptide reads, in one-letter code: MLDPNLLRTEPDAVAEKLARRGFKLDVDKLRALEERRKVLQVQTENLQAERNSRSKSIGQAKARGEDIEPLRLEVNKLGEQLDAAKSELETLLAEIRDIALAIPNIPHDDVPVGRDENDNVEVSRWGTPRQFDFEVRDHVTLGEMHGGLDFAAAVKLTGSRFVVMKGQLARLHRALAQFMLDLHTEQHGYSENYVPYLVNQDTLYGTGQLPKFAGDLFHTRPLEEEADSSNYALIPTAEVPLTNLVRDEIIDEDDLPIKMTAHTPCFRSEAGSYGRDTRGLIRMHQFDKVEMVQIVRPEDSMAALEEMTGHAEKVLQLLGLPYRKVALCTGDMGFSACKTYDLEVWVPAQNTYREISSCSNVWDFQARRMQARCRSKSDKKTRLVHTLNGSGLAVGRTLVALMENYQQADGRIEIPEVLRPYMRGLEYIG.

Thr-237–Glu-239 serves as a coordination point for L-serine. Residue Arg-268–Glu-270 participates in ATP binding. Glu-291 is an L-serine binding site. Residue Glu-355–Ser-358 participates in ATP binding. Ser-391 provides a ligand contact to L-serine.

This sequence belongs to the class-II aminoacyl-tRNA synthetase family. Type-1 seryl-tRNA synthetase subfamily. Homodimer. The tRNA molecule binds across the dimer.

The protein localises to the cytoplasm. It carries out the reaction tRNA(Ser) + L-serine + ATP = L-seryl-tRNA(Ser) + AMP + diphosphate + H(+). It catalyses the reaction tRNA(Sec) + L-serine + ATP = L-seryl-tRNA(Sec) + AMP + diphosphate + H(+). It functions in the pathway aminoacyl-tRNA biosynthesis; selenocysteinyl-tRNA(Sec) biosynthesis; L-seryl-tRNA(Sec) from L-serine and tRNA(Sec): step 1/1. Catalyzes the attachment of serine to tRNA(Ser). Is also able to aminoacylate tRNA(Sec) with serine, to form the misacylated tRNA L-seryl-tRNA(Sec), which will be further converted into selenocysteinyl-tRNA(Sec). This chain is Serine--tRNA ligase, found in Klebsiella pneumoniae subsp. pneumoniae (strain ATCC 700721 / MGH 78578).